Reading from the N-terminus, the 233-residue chain is uncharacterized protein (233 aa).

The segment at 190-233 is disordered; that stretch reads LNTSLSEDDTESIVETDYSEEEKESISETESSSDDESYSLYDSF. Residues 195–212 show a composition bias toward acidic residues; sequence SEDDTESIVETDYSEEEK.

This sequence belongs to the asfivirus DP238L family.

This is an uncharacterized protein from Ornithodoros (relapsing fever ticks).